The sequence spans 933 residues: DNA replication licensing factor MCM4 (933 aa).

2 disordered regions span residues 1 to 149 and 154 to 173; these read MSQQ…PRRI and TRSG…PSEA. Low complexity predominate over residues 27 to 42; the sequence is PPQLSSPALFYSSSSS. 2 stretches are compositionally biased toward polar residues: residues 49–59 and 69–85; these read RNNSQNLSQGE and SPLN…SDVF. Phosphoserine occurs at positions 52, 56, and 69. The span at 86–103 shows a compositional bias: low complexity; it reads QSQGRQGRIRSSASASGR. Residues 117–129 show a composition bias toward polar residues; sequence PTSSSSLGRNGQN. The segment covering 164–173 has biased composition (low complexity); it reads SSSSAPPSEA. The MCM domain occupies 518–725; that stretch reads LYSLLARSIA…NDRELAKHLT (208 aa). 568 to 575 is a binding site for ATP; that stretch reads GDPSTSKS. An Arginine finger motif is present at residues 700-703; it reads SRFD.

The protein belongs to the MCM family. In terms of assembly, component of the MCM2-7 complex. The complex forms a toroidal hexameric ring with the proposed subunit order MCM2-MCM6-MCM4-MCM7-MCM3-MCM5; loaded onto DNA, forms a head-head double hexamer.

The protein localises to the nucleus. The enzyme catalyses ATP + H2O = ADP + phosphate + H(+). Its function is as follows. Acts as a component of the MCM2-7 complex (MCM complex) which is the putative replicative helicase essential for 'once per cell cycle' DNA replication initiation and elongation in eukaryotic cells. The active ATPase sites in the MCM2-7 ring are formed through the interaction surfaces of two neighboring subunits such that a critical structure of a conserved arginine finger motif is provided in trans relative to the ATP-binding site of the Walker A box of the adjacent subunit. The six ATPase active sites, however, are likely to contribute differentially to the complex helicase activity. Once loaded onto DNA, double hexamers can slide on dsDNA in the absence of ATPase activity. Required for S phase execution. The sequence is that of DNA replication licensing factor MCM4 (MCM4) from Saccharomyces cerevisiae (strain ATCC 204508 / S288c) (Baker's yeast).